We begin with the raw amino-acid sequence, 585 residues long: DNA mismatch repair protein MutL (585 aa).

Belongs to the DNA mismatch repair MutL/HexB family.

This protein is involved in the repair of mismatches in DNA. It is required for dam-dependent methyl-directed DNA mismatch repair. May act as a 'molecular matchmaker', a protein that promotes the formation of a stable complex between two or more DNA-binding proteins in an ATP-dependent manner without itself being part of a final effector complex. This Methanoculleus marisnigri (strain ATCC 35101 / DSM 1498 / JR1) protein is DNA mismatch repair protein MutL.